The sequence spans 388 residues: Ras-related protein Rab-26 (388 aa).

Residues 1–115 (MASTAVGLGG…HHHSQLSLTG (115 aa)) are disordered. Positions 7–21 (GLGGGEGDPGAGGPP) are enriched in gly residues. Residues 47 to 56 (RIEELRRRPF) are compositionally biased toward basic and acidic residues. The span at 67–86 (PASVSASITTTTTQQQQQHH) shows a compositional bias: low complexity. Over residues 87 to 109 (NPSHHHQSSHHQPSHHHHHHHHS) the composition is skewed to basic residues. A GTP-binding site is contributed by 197-204 (GDSGVGKT). The Effector region signature appears at 219-228 (SFSATVGIAL). GTP-binding positions include 246-250 (DTAGQ) and 304-307 (NKAD). The S-palmitoyl cysteine moiety is linked to residue cysteine 382. Cysteine 385 carries the cysteine methyl ester modification. The S-geranylgeranyl cysteine moiety is linked to residue cysteine 385. The propeptide at 386-388 (RNM) is removed in mature form.

The protein belongs to the small GTPase superfamily. Rab family.

The protein resides in the cell membrane. Participates in exocrine secretion. In Drosophila melanogaster (Fruit fly), this protein is Ras-related protein Rab-26.